The following is a 90-amino-acid chain: PqqA binding protein 2 (90 aa).

The protein belongs to the PqqD family. As to quaternary structure, monomer. Interacts with PqqE.

Its pathway is cofactor biosynthesis; pyrroloquinoline quinone biosynthesis. Functions as a PqqA binding protein and presents PqqA to PqqE, in the pyrroloquinoline quinone (PQQ) biosynthetic pathway. In Pseudomonas putida (strain ATCC 47054 / DSM 6125 / CFBP 8728 / NCIMB 11950 / KT2440), this protein is PqqA binding protein 2 (pqqD2).